Here is a 353-residue protein sequence, read N- to C-terminus: MSSAFRTVWWEAGQVCLIDQRLLPNETRIVRCAAVEDVAYAIRTMQIRGAPAIGCAAAYGMALAACSAAHDAVGDVARIYARLAEAKALLDAQRPTAVNLSWATRRVLERAQSLNDPSPHDVAQRVLEEAHAILAEDLAMCHAIGRHGVALIPPRGHVLTHCNAGGLATAGYGTALAPVRTAHEQGRPIHVYVDETRPFLQGARLTAWELIQERIPLTLITDNMAGYFMKRGDIDCVIVGADRIVANGDVANKIGTYSLAVLARAHRIPFYVAAPSSTIDCSLPNGDAIPIEERSSDEVTMLFGRRIAPEGVIAAHPAFDVTPADLVTAIITECGVIYPPFAGALQRSGPKRH.

Substrate is bound by residues 48-50, R94, and Q201; that span reads RGA. Catalysis depends on D242, which acts as the Proton donor. 252–253 serves as a coordination point for substrate; sequence NK.

The protein belongs to the eIF-2B alpha/beta/delta subunits family. MtnA subfamily.

The catalysed reaction is 5-(methylsulfanyl)-alpha-D-ribose 1-phosphate = 5-(methylsulfanyl)-D-ribulose 1-phosphate. It participates in amino-acid biosynthesis; L-methionine biosynthesis via salvage pathway; L-methionine from S-methyl-5-thio-alpha-D-ribose 1-phosphate: step 1/6. In terms of biological role, catalyzes the interconversion of methylthioribose-1-phosphate (MTR-1-P) into methylthioribulose-1-phosphate (MTRu-1-P). In Roseiflexus sp. (strain RS-1), this protein is Methylthioribose-1-phosphate isomerase.